Reading from the N-terminus, the 614-residue chain is Laccase 1 (614 aa).

Positions 1–21 are cleaved as a signal peptide; the sequence is MSRFARLLLMVVALFFTNAWA. Plastocyanin-like domains follow at residues 30-143 and 172-360; these read ITWK…IRPK and YLVV…MRIP. Asn-75 carries an N-linked (GlcNAc...) asparagine glycan. Residues His-79, His-81, His-123, and His-125 each contribute to the Cu cation site. N-linked (GlcNAc...) asparagine glycans are attached at residues Asn-257, Asn-280, Asn-445, Asn-469, and Asn-485. The Plastocyanin-like 3 domain maps to 469 to 599; that stretch reads NATRDTENDG…GGMGIAILDG (131 aa). Residues His-507, His-510, and His-512 each contribute to the Cu cation site. Asn-527 carries N-linked (GlcNAc...) asparagine glycosylation. 4 residues coordinate Cu cation: His-581, Cys-582, His-583, and His-587.

It belongs to the multicopper oxidase family. Requires Cu cation as cofactor.

Its subcellular location is the cell surface. It functions in the pathway pigment biosynthesis. Its function is as follows. Laccase; part of the Pks1 gene cluster that mediates the biosynthesis of an anthraquinone derivative pigment that contributes to conidial pigmentation that provides protection from UV radiation, heat and cold stress. The polyketide synthase Pks1 produces 1-acetyl-2,4,6,8-tetrahydroxy-9,10-anthraquinone though condensation of acetyl-CoA with malonyl-CoA. The dehydratase EthD and the laccase Mlac1 further convert the anthraquinone derivative into the final conidial pigment. This Metarhizium majus (strain ARSEF 297) protein is Laccase 1.